The chain runs to 280 residues: Thioredoxin-related transmembrane protein 1 (280 aa).

The first 26 residues, 1–26 (MAPSGSLAVPLAVLVLLLWGAPWTHG), serve as a signal peptide directing secretion. One can recognise a Thioredoxin domain in the interval 27 to 132 (RRSNVRVITD…FINFISDKEW (106 aa)). The Extracellular portion of the chain corresponds to 27-180 (RRSNVRVITD…EDLGLPVWGS (154 aa)). Residues C56 and C59 each act as nucleophile in the active site. A disulfide bridge links C56 with C59. A helical transmembrane segment spans residues 181-203 (YTVFALATLFSGLLLGLCMIFVA). Over 204 to 280 (DCLCPSKRRR…LGPSLATDKS (77 aa)) the chain is Cytoplasmic. 2 S-palmitoyl cysteine lipidation sites follow: C205 and C207. The interval 218-280 (PYPSKKLLSE…LGPSLATDKS (63 aa)) is disordered. Phosphoserine occurs at positions 228, 247, 270, 274, and 280. Acidic residues predominate over residues 237-252 (EEQEADEEDVSEEEAE).

Interacts with ATP2A2. In terms of processing, palmitoylated; palmitoylation is required for localization to mitochondria-associated endoplasmic reticulum membrane (MAM). Ubiquitous. Highly expressed in kidney, liver, placenta and lung.

Its subcellular location is the endoplasmic reticulum membrane. The protein localises to the mitochondrion membrane. It is found in the secreted. The enzyme catalyses Catalyzes the rearrangement of -S-S- bonds in proteins.. Functionally, thiredoxin domain-containing protein that participates in various redox reactions through the reversible oxidation of its active center dithiol to a disulfide and catalyze dithiol-disulfide exchange reactions. Acts as a key inhibitor of the alternative triglyceride biosynthesis pathway by inhibiting the activity of TMEM68/DIESL at the endoplasmic reticulum, thereby restricting accumulation of triacylglycerol. The alternative triglyceride biosynthesis pathway mediates formation of triacylglycerol from diacylglycerol and membrane phospholipids. Acts as a protein disulfide isomerase by catalyzing formation or reduction of disulfide bonds. Specifically mediates formation of disulfide bonds of transmembrane proteins at the endoplasmic reticulum membrane. Involved in endoplasmic reticulum-associated degradation (ERAD) via its protein disulfide isomerase activity by acting on folding-defective polypeptides at the endoplasmic reticulum membrane. Acts as a negative regulator of platelet aggregation following secretion in the extracellular space. Acts as a regulator of endoplasmic reticulum-mitochondria contact sites via its ability to regulate redox signals. Regulates endoplasmic reticulum-mitochondria Ca(2+) flux. The polypeptide is Thioredoxin-related transmembrane protein 1 (Homo sapiens (Human)).